A 394-amino-acid polypeptide reads, in one-letter code: Phosphoglycerate kinase (394 aa).

Substrate contacts are provided by residues D21 to N23, R36, H59 to R62, R118, and R151. S183 is subject to Phosphoserine. ATP contacts are provided by K201 and G292. T299 is modified (phosphothreonine). Residues E323 and G350 to S353 each bind ATP.

This sequence belongs to the phosphoglycerate kinase family. As to quaternary structure, monomer.

It is found in the cytoplasm. It catalyses the reaction (2R)-3-phosphoglycerate + ATP = (2R)-3-phospho-glyceroyl phosphate + ADP. It participates in carbohydrate degradation; glycolysis; pyruvate from D-glyceraldehyde 3-phosphate: step 2/5. This Bacillus thuringiensis subsp. konkukian (strain 97-27) protein is Phosphoglycerate kinase.